A 340-amino-acid chain; its full sequence is Guanine nucleotide-binding protein subunit beta-1 (340 aa).

WD repeat units lie at residues 53-83 (GHLA…IVWD), 95-125 (LRSS…SIYS), 141-170 (GHTG…ALWD), 182-212 (GHTG…KLWD), 224-254 (GHES…RLFD), 268-298 (NIIC…NVWD), and 310-340 (GHDN…KIWN).

Belongs to the WD repeat G protein beta family. In terms of assembly, g proteins are composed of 3 units, alpha, beta and gamma. Interacts with G protein gamma subunits gpc-1 and gpc-2 and with egl-10 and eat-16. Interacts with goa-1 (in GDP-bound form).

In terms of biological role, guanine nucleotide-binding proteins (G proteins) are involved as a modulator or transducer in various transmembrane signaling systems. The beta and gamma chains are required for the GTPase activity, for replacement of GDP by GTP, and for G protein-effector interaction. In the early embryo, controls the magnitude of the forces acting on centrosomes but is not required for generating asymmetric forces. The protein is Guanine nucleotide-binding protein subunit beta-1 (gpb-1) of Caenorhabditis briggsae.